The following is a 498-amino-acid chain: Probable malate:quinone oxidoreductase 2 (498 aa).

The protein belongs to the MQO family. Requires FAD as cofactor.

It catalyses the reaction (S)-malate + a quinone = a quinol + oxaloacetate. The protein operates within carbohydrate metabolism; tricarboxylic acid cycle; oxaloacetate from (S)-malate (quinone route): step 1/1. This Staphylococcus aureus (strain MW2) protein is Probable malate:quinone oxidoreductase 2.